The sequence spans 360 residues: Peptide chain release factor 1 (360 aa).

N5-methylglutamine is present on Gln-235. Residues 284-313 (AKRQQAEASTRRNLLGSGDRSDRNRTYNFP) form a disordered region.

This sequence belongs to the prokaryotic/mitochondrial release factor family. Methylated by PrmC. Methylation increases the termination efficiency of RF1.

It is found in the cytoplasm. In terms of biological role, peptide chain release factor 1 directs the termination of translation in response to the peptide chain termination codons UAG and UAA. The chain is Peptide chain release factor 1 from Salmonella arizonae (strain ATCC BAA-731 / CDC346-86 / RSK2980).